A 443-amino-acid polypeptide reads, in one-letter code: Intermediate filament protein ifd-2 (443 aa).

Residues 1-58 (MTDPLNPTRLQNHPALARIIESGRTNLPTGITTSGALSAYAQNAAAIIRDNREREKVE) form a head region. The region spanning 55-405 (EKVEIADLNN…KLMENAEHLR (351 aa)) is the IF rod domain. The segment at 59-90 (IADLNNRLARYVEKVRFLEAQNRVLENDIGVF) is coil 1A. The interval 91-104 (RNAAHTHSERIAVY) is linker 1. The coil 1B stretch occupies residues 105 to 239 (FESEKASLFT…SQHDIAIREE (135 aa)). Positions 240-257 (ISKARRDTTNKNRDYFHN) are linker 12. The tract at residues 258–403 (ELHAAMKEIR…YRKLMENAEH (146 aa)) is coil 2. Residues 404–443 (LRTTVQTHVTYNAPPPPLPQSGPRTTSYHAYGSAYNDSLL) are tail.

This sequence belongs to the intermediate filament family.

Its subcellular location is the cytoplasm. Its function is as follows. Cytoplasmic intermediate filaments provide mechanical strength to cells. Not essential protein. The polypeptide is Intermediate filament protein ifd-2 (ifd-2) (Caenorhabditis elegans).